The following is a 570-amino-acid chain: MARISRAAYAQMYGPTVGDKVRLADTELFIEVEKDLTIHGEEVKFGGGKVIRDGMGQSQVSRAQGAVDTVITNALVVDAGAGIFKADIGLKDGRIAAIGKAGNPDTQDGVTIIIGPGTEIIAGEGKILTAGGFDAHIHFICPQQIEEALMSGITTMLGGGTGPAHGTLATTCTPGPWHMARMIQSFDAFPMNIGLSGKGNASLPAALEEMVLGGACSLKLHEDWGTTPAAIDCCLSVADDYDVQVMIHTDTLNESGFVENTVAAIKGRTIHAFHTEGAGGGHAPDIIKVCGLPNVIPSSTNPTRPYTVNTLAEHLDMLMVCHHLSPSIPEDIAFAESRIRKETIAAEDILHDIGAFSIISSDSQAMGRVGEVAIRTWQTADKMKRQRGALPQETGDNDNFRVRRYIAKYTINPAIAHGLSKDIGSIAVGKRADLVLWNPAFFGVKPDMVLVGGMIAAAPMGDPNASIPTPQPMHYRPMFGAYGKARTNSSVTFVSKAALESGLHGRLGVEKQFVAVENTRGGIGKHSMVLNDATPHVEVDPETYEVRADGELLTCEPATVLPMAQRYFLF.

The region spanning Gly131 to Phe570 is the Urease domain. Ni(2+)-binding residues include His136, His138, and Lys219. Lys219 carries the post-translational modification N6-carboxylysine. Position 221 (His221) interacts with substrate. Ni(2+) is bound by residues His248 and His274. The Proton donor role is filled by His322. Asp362 serves as a coordination point for Ni(2+).

Belongs to the metallo-dependent hydrolases superfamily. Urease alpha subunit family. Heterotrimer of UreA (gamma), UreB (beta) and UreC (alpha) subunits. Three heterotrimers associate to form the active enzyme. Requires Ni cation as cofactor. Carboxylation allows a single lysine to coordinate two nickel ions.

The protein resides in the cytoplasm. It carries out the reaction urea + 2 H2O + H(+) = hydrogencarbonate + 2 NH4(+). It participates in nitrogen metabolism; urea degradation; CO(2) and NH(3) from urea (urease route): step 1/1. The sequence is that of Urease subunit alpha from Mesorhizobium japonicum (strain LMG 29417 / CECT 9101 / MAFF 303099) (Mesorhizobium loti (strain MAFF 303099)).